The following is a 1579-amino-acid chain: tRNA (guanosine(18)-2'-O)-methyltransferase TARBP1 (1579 aa).

At Met-1 the chain carries N-acetylmethionine. Residues Val-1501, Gly-1524, Ile-1544, Gln-1546, and Leu-1553 each contribute to the S-adenosyl-L-homocysteine site.

Belongs to the class IV-like SAM-binding methyltransferase superfamily. RNA methyltransferase TrmH family. Monomer and homodimer.

It carries out the reaction guanosine(18) in tRNA + S-adenosyl-L-methionine = 2'-O-methylguanosine(18) in tRNA + S-adenosyl-L-homocysteine + H(+). S-adenosyl-L-methionine-dependent 2'-O-ribose methyltransferase that catalyzes the formation of 2'-O-methylguanosine at position 18 (Gm18) in a subset of tRNA. Selectively mediates Gm18 methylation of tRNAGln-TTG/CTG and tRNASer-TGA/GCT. Gm18 modification can enhance the stability of modified tRNAs. This is tRNA (guanosine(18)-2'-O)-methyltransferase TARBP1 from Mus musculus (Mouse).